Reading from the N-terminus, the 101-residue chain is NAD(P)H-quinone oxidoreductase subunit 4L, chloroplastic (101 aa).

3 helical membrane passes run 2–22 (MLEHVLVLGAYLFSIGIYGLI), 32–52 (MCLELILNAVNINLVTFSDFF), and 61–81 (ILSIFVIAIAAAEAAIGLAIV).

The protein belongs to the complex I subunit 4L family. NDH is composed of at least 16 different subunits, 5 of which are encoded in the nucleus.

It is found in the plastid. It localises to the chloroplast thylakoid membrane. The catalysed reaction is a plastoquinone + NADH + (n+1) H(+)(in) = a plastoquinol + NAD(+) + n H(+)(out). The enzyme catalyses a plastoquinone + NADPH + (n+1) H(+)(in) = a plastoquinol + NADP(+) + n H(+)(out). Functionally, NDH shuttles electrons from NAD(P)H:plastoquinone, via FMN and iron-sulfur (Fe-S) centers, to quinones in the photosynthetic chain and possibly in a chloroplast respiratory chain. The immediate electron acceptor for the enzyme in this species is believed to be plastoquinone. Couples the redox reaction to proton translocation, and thus conserves the redox energy in a proton gradient. This Buxus microphylla (Littleleaf boxwood) protein is NAD(P)H-quinone oxidoreductase subunit 4L, chloroplastic.